We begin with the raw amino-acid sequence, 143 residues long: uncharacterized protein (143 aa).

The protein belongs to the SufE family.

This is an uncharacterized protein from Mycobacterium tuberculosis (strain CDC 1551 / Oshkosh).